Consider the following 313-residue polypeptide: Ribosomal RNA small subunit methyltransferase H (313 aa).

S-adenosyl-L-methionine-binding positions include 36-38, D56, F80, D102, and Q109; that span reads GGH.

It belongs to the methyltransferase superfamily. RsmH family.

Its subcellular location is the cytoplasm. It catalyses the reaction cytidine(1402) in 16S rRNA + S-adenosyl-L-methionine = N(4)-methylcytidine(1402) in 16S rRNA + S-adenosyl-L-homocysteine + H(+). Its function is as follows. Specifically methylates the N4 position of cytidine in position 1402 (C1402) of 16S rRNA. The protein is Ribosomal RNA small subunit methyltransferase H of Haemophilus ducreyi (strain 35000HP / ATCC 700724).